Consider the following 122-residue polypeptide: Small ribosomal subunit protein uS13 (122 aa).

Residues 99–122 (RGQRTHTNARTRKGPAKAIAGKKK) form a disordered region.

It belongs to the universal ribosomal protein uS13 family. In terms of assembly, part of the 30S ribosomal subunit. Forms a loose heterodimer with protein S19. Forms two bridges to the 50S subunit in the 70S ribosome.

Functionally, located at the top of the head of the 30S subunit, it contacts several helices of the 16S rRNA. In the 70S ribosome it contacts the 23S rRNA (bridge B1a) and protein L5 of the 50S subunit (bridge B1b), connecting the 2 subunits; these bridges are implicated in subunit movement. Contacts the tRNAs in the A and P-sites. The sequence is that of Small ribosomal subunit protein uS13 from Rhodopseudomonas palustris (strain BisB5).